Consider the following 43-residue polypeptide: METATLFAISISCLLVSFTGYALYTAFGQPSEQLRDPFEEHED.

A helical membrane pass occupies residues Thr-5–Phe-27.

This sequence belongs to the PsbN family.

Its subcellular location is the plastid. It localises to the chloroplast thylakoid membrane. In terms of biological role, may play a role in photosystem I and II biogenesis. The chain is Protein PsbN from Thuja plicata (Western red-cedar).